The sequence spans 421 residues: D-inositol 3-phosphate glycosyltransferase (421 aa).

His-13 is a 1D-myo-inositol 3-phosphate binding site. Residues 19–20 (QP) and Gly-27 contribute to the UDP-N-acetyl-alpha-D-glucosamine site. 1D-myo-inositol 3-phosphate-binding positions include 24-29 (DAGGMN), Lys-82, Tyr-115, Thr-139, and Arg-159. Arg-233, Lys-238, and Val-294 together coordinate UDP-N-acetyl-alpha-D-glucosamine. Mg(2+)-binding residues include Phe-303, Arg-304, and Ala-306. Positions 316 and 324 each coordinate UDP-N-acetyl-alpha-D-glucosamine. Thr-330 provides a ligand contact to Mg(2+).

It belongs to the glycosyltransferase group 1 family. MshA subfamily. Homodimer.

It catalyses the reaction 1D-myo-inositol 3-phosphate + UDP-N-acetyl-alpha-D-glucosamine = 1D-myo-inositol 2-acetamido-2-deoxy-alpha-D-glucopyranoside 3-phosphate + UDP + H(+). In terms of biological role, catalyzes the transfer of a N-acetyl-glucosamine moiety to 1D-myo-inositol 3-phosphate to produce 1D-myo-inositol 2-acetamido-2-deoxy-glucopyranoside 3-phosphate in the mycothiol biosynthesis pathway. The protein is D-inositol 3-phosphate glycosyltransferase of Arthrobacter sp. (strain FB24).